A 395-amino-acid chain; its full sequence is Cyclic AMP-responsive element-binding protein 3-like protein 4 (395 aa).

The Cytoplasmic segment spans residues 1 to 295 (MDLGIPDLLD…QTSNKAAQTS (295 aa)). The tract at residues 82 to 108 (EASPGSDSGISEDPCHPDSPPAPRATS) is disordered. The 64-residue stretch at 217–280 (VLKKVRRKIR…ISLVAQLRQL (64 aa)) folds into the bZIP domain. Residues 219 to 248 (KKVRRKIRNKQSAQDSRRRKKEYIDGLESR) form a basic motif region. The tract at residues 259–280 (LQKKVQELERHNISLVAQLRQL) is leucine-zipper. The helical; Signal-anchor for type II membrane protein transmembrane segment at 296-316 (TCVLILLFSLALIILPSFSPF) threads the bilayer. The Lumenal segment spans residues 317–395 (QSRPEAGSED…IRSVLHADEM (79 aa)). The segment at 355-395 (RLREPPGAKDANGSTRTLLEKMGGKPRPSGRIRSVLHADEM) is disordered. N-linked (GlcNAc...) asparagine glycosylation occurs at N366.

The protein belongs to the bZIP family. ATF subfamily. Binds DNA as a dimer. N-glycosylated in the C-terminal region. Post-translationally, controlled by regulated intramembrane proteolysis (RIP). Following ER stress a fragment containing the cytoplasmic transcription factor domain is released by proteolysis. The cleavage seems to be performed sequentially by site-1 and site-2 proteases (PS1 and PS2). PS1 cleavage may be suppressed by a determinant in the C-terminal region. According to PubMed:11830526, exclusively expressed in the prostate. Expressed in breast and prostate cancer cell lines. Expressed in prostatic luminal epithelial cells (at protein level). Expression is significantly more abundant in prostate cancer than in benign prostatic tissue (prostatic hyperplasia). According to PubMed:12111373, also expressed in brain, pancreas and skeletal muscle, and at lower levels in small intestine, testis, leukocyte and thymus.

The protein localises to the endoplasmic reticulum membrane. It is found in the golgi apparatus membrane. The protein resides in the nucleus. In terms of biological role, transcriptional activator that may play a role in the unfolded protein response. Binds to the UPR element (UPRE) but not to CRE element. Preferentially binds DNA with to the consensus sequence 5'-T[GT]ACGT[GA][GT]-3' and has transcriptional activation activity from UPRE. Binds to NF-kappa-B site and has transcriptional activation activity from NF-kappa-B-containing regulatory elements. This Homo sapiens (Human) protein is Cyclic AMP-responsive element-binding protein 3-like protein 4 (CREB3L4).